The primary structure comprises 403 residues: Queuine tRNA-ribosyltransferase catalytic subunit 1 (403 aa).

Ala2 bears the N-acetylalanine mark. Asp105 serves as the catalytic Proton acceptor. 105–109 (DSGGF) is a binding site for queuine. Position 139 is a phosphoserine (Ser139). Queuine is bound by residues Asp159, Gln202, and Gly229. Positions 260 to 266 (GVGYATD) are RNA binding. Asp279 (nucleophile) is an active-site residue. Residues 284 to 288 (TRTAR) form an RNA binding; important for wobble base 34 recognition region. Zn(2+)-binding residues include Cys317, Cys319, Cys322, and His348.

The protein belongs to the queuine tRNA-ribosyltransferase family. Heterodimer of a catalytic subunit QTRT1 and an accessory subunit QTRT2. The cofactor is Zn(2+). Expressed in brain, heart, kidney, liver, ling, skeletal muscle, spleen and testis.

Its subcellular location is the cytoplasm. It localises to the mitochondrion outer membrane. The protein resides in the nucleus. The catalysed reaction is guanosine(34) in tRNA + queuine = queuosine(34) in tRNA + guanine. In terms of biological role, catalytic subunit of the queuine tRNA-ribosyltransferase (TGT) that catalyzes the base-exchange of a guanine (G) residue with queuine (Q) at position 34 (anticodon wobble position) in tRNAs with GU(N) anticodons (tRNA-Asp, -Asn, -His and -Tyr), resulting in the hypermodified nucleoside queuosine (7-(((4,5-cis-dihydroxy-2-cyclopenten-1-yl)amino)methyl)-7-deazaguanosine). Catalysis occurs through a double-displacement mechanism. The nucleophile active site attacks the C1' of nucleotide 34 to detach the guanine base from the RNA, forming a covalent enzyme-RNA intermediate. The proton acceptor active site deprotonates the incoming queuine, allowing a nucleophilic attack on the C1' of the ribose to form the product. Modification of cytoplasmic tRNAs with queuosine controls the elongation speed of cognate codons, thereby ensuring the correct folding of nascent proteins to maintain proteome integrity. This Mus musculus (Mouse) protein is Queuine tRNA-ribosyltransferase catalytic subunit 1.